Here is a 198-residue protein sequence, read N- to C-terminus: Recombination protein RecR (198 aa).

A C4-type zinc finger spans residues 57–72 (CSVCGHITDQDPCAIC). One can recognise a Toprim domain in the interval 80–175 (SLICVVQDPK…RTTRIAHGLP (96 aa)).

Belongs to the RecR family.

May play a role in DNA repair. It seems to be involved in an RecBC-independent recombinational process of DNA repair. It may act with RecF and RecO. The polypeptide is Recombination protein RecR (Oceanobacillus iheyensis (strain DSM 14371 / CIP 107618 / JCM 11309 / KCTC 3954 / HTE831)).